Reading from the N-terminus, the 332-residue chain is L-lactate dehydrogenase C chain (332 aa).

The residue at position 2 (Ser-2) is a Blocked amino end (Ser). NAD(+)-binding positions include 29–57 (GNVG…DENK) and Arg-99. Substrate contacts are provided by Arg-106, Asn-138, and Arg-169. Residue Asn-138 participates in NAD(+) binding. His-193 (proton acceptor) is an active-site residue. Thr-248 is a substrate binding site.

It belongs to the LDH/MDH superfamily. LDH family. As to quaternary structure, homotetramer. Interacts with RABL2/RABL2A; binds preferentially to GTP-bound RABL2.

The protein localises to the cytoplasm. The enzyme catalyses (S)-lactate + NAD(+) = pyruvate + NADH + H(+). It participates in fermentation; pyruvate fermentation to lactate; (S)-lactate from pyruvate: step 1/1. Its function is as follows. Possible role in sperm motility. The chain is L-lactate dehydrogenase C chain (Ldhc) from Rattus norvegicus (Rat).